The primary structure comprises 557 residues: 2,3-bisphosphoglycerate-independent phosphoglycerate mutase 1 (557 aa).

Residues aspartate 27 and serine 80 each contribute to the Mn(2+) site. The active-site Phosphoserine intermediate is serine 80. Substrate is bound by residues histidine 139, arginine 169–aspartate 170, arginine 205, arginine 212, arginine 285–arginine 288, and lysine 360. Residues aspartate 429, histidine 433, aspartate 470, histidine 471, and histidine 500 each coordinate Mn(2+).

It belongs to the BPG-independent phosphoglycerate mutase family. As to quaternary structure, monomer. The cofactor is Mn(2+).

The protein localises to the cytoplasm. It carries out the reaction (2R)-2-phosphoglycerate = (2R)-3-phosphoglycerate. It functions in the pathway carbohydrate degradation; glycolysis; pyruvate from D-glyceraldehyde 3-phosphate: step 3/5. In terms of biological role, catalyzes the interconversion of 2-phosphoglycerate (2-PGA) and 3-phosphoglycerate (3-PGA). Required for guard cell function (e.g. blue light-, abscisic acid- (ABA), and low CO(2)-regulated stomatal movements) and fertility (e.g. pollen grains production). The chain is 2,3-bisphosphoglycerate-independent phosphoglycerate mutase 1 (PGM1) from Arabidopsis thaliana (Mouse-ear cress).